Here is a 245-residue protein sequence, read N- to C-terminus: Gas vesicle protein F (245 aa).

It belongs to the gas vesicle GvpF/GvpL family. Binds GvpA.

The protein resides in the gas vesicle. In terms of biological role, a minor component of the gas vesicle, may be involved in preventing GvpA aggregation during gas vesicle nucleation. Gas vesicles (GV) are hollow, gas filled proteinaceous nanostructures. During planktonic growth they allow positioning of the organism at a favorable depth for light or nutrient acquisition. In Dolichospermum flosaquae (Anabaena flos-aquae), this protein is Gas vesicle protein F.